The following is a 316-amino-acid chain: C1GALT1-specific chaperone 1 (316 aa).

Residues 1–6 (MLSESS) lie on the Cytoplasmic side of the membrane. A helical; Signal-anchor for type II membrane protein membrane pass occupies residues 7–26 (SFLKGVMLGSIFCALITMLG). Topologically, residues 27 to 316 (HIRIGNRMHH…FLPPNGSEND (290 aa)) are lumenal.

The protein belongs to the glycosyltransferase 31 family. Beta3-Gal-T subfamily. As to quaternary structure, associates with core 1 beta-3-galactosyltransferase (C1GALT1), probably not with the soluble active form.

The protein localises to the membrane. Functionally, probable chaperone required for the generation of 1 O-glycan Gal-beta1-3GalNAc-alpha1-Ser/Thr (T antigen), which is a precursor for many extended O-glycans in glycoproteins. Probably acts as a specific molecular chaperone assisting the folding/stability of core 1 beta-3-galactosyltransferase (C1GALT1). This Mus musculus (Mouse) protein is C1GALT1-specific chaperone 1 (C1galt1c1).